We begin with the raw amino-acid sequence, 326 residues long: Vestitone reductase (326 aa).

NADP(+) is bound by residues G12 to G18, R37, and Y164.

It belongs to the NAD(P)-dependent epimerase/dehydratase family. Dihydroflavonol-4-reductase subfamily. As to quaternary structure, monomer. Detected in roots, and at lower levels in root nodules. Not detected in petioles, leaf and stem.

The catalysed reaction is a (3R,4R)-4,2'-dihydroxyisoflavan + NADP(+) = a (3R)-2'-hydroxyisoflavanone + NADPH + H(+). With respect to regulation, inhibited by vestitone concentrations above 50 uM. In terms of biological role, stereospecific enzyme that catalyzes the NADPH-dependent reduction of (3R)-vestitone to (3R,4R)-4'-methoxyisoflavan-2',4,7-triol (DMI). Has no activity with (3S)-vestitone. Catalyzes the penultimate step in the biosynthesis of the phytoalexin medicarpin, and thereby contributes to plant defense reactions. The sequence is that of Vestitone reductase from Medicago sativa (Alfalfa).